We begin with the raw amino-acid sequence, 576 residues long: Arginine--tRNA ligase (576 aa).

The short motif at 122-132 (PNVAKEMHVGH) is the 'HIGH' region element.

It belongs to the class-I aminoacyl-tRNA synthetase family. As to quaternary structure, monomer.

Its subcellular location is the cytoplasm. The enzyme catalyses tRNA(Arg) + L-arginine + ATP = L-arginyl-tRNA(Arg) + AMP + diphosphate. In Pectobacterium atrosepticum (strain SCRI 1043 / ATCC BAA-672) (Erwinia carotovora subsp. atroseptica), this protein is Arginine--tRNA ligase.